Here is a 132-residue protein sequence, read N- to C-terminus: Small ribosomal subunit protein uS8 (132 aa).

This sequence belongs to the universal ribosomal protein uS8 family. Part of the 30S ribosomal subunit. Contacts proteins S5 and S12.

Its function is as follows. One of the primary rRNA binding proteins, it binds directly to 16S rRNA central domain where it helps coordinate assembly of the platform of the 30S subunit. The polypeptide is Small ribosomal subunit protein uS8 (Mycobacterium bovis (strain ATCC BAA-935 / AF2122/97)).